A 197-amino-acid chain; its full sequence is Putative rho GDP-dissociation inhibitor 1 (197 aa).

Belongs to the Rho GDI family. As to quaternary structure, interacts with rac1A, rac1B, rac1C, racB, raCC and RacE.

The protein localises to the cytoplasm. Functionally, regulates the GDP/GTP exchange reaction of the Rho proteins by inhibiting the dissociation of GDP from them, and the subsequent binding of GTP to them. Regulates the Rac-dependent signaling pathways controlling cytokinesis, actin reorganization and the contractile vacuole. Required for efficient accumulation of cap at the cell cortex. This chain is Putative rho GDP-dissociation inhibitor 1 (rdiA), found in Dictyostelium discoideum (Social amoeba).